Consider the following 61-residue polypeptide: MAKKSMIIRALRKPKYKTRQNNRCKLCGRPRGYLRDFCMCRICFRKYASEGLIPGVSKSSW.

Zn(2+) is bound by residues C24, C27, C40, and C43.

Belongs to the universal ribosomal protein uS14 family. Zinc-binding uS14 subfamily. Part of the 30S ribosomal subunit. Contacts proteins S3 and S10. It depends on Zn(2+) as a cofactor.

Binds 16S rRNA, required for the assembly of 30S particles and may also be responsible for determining the conformation of the 16S rRNA at the A site. The sequence is that of Small ribosomal subunit protein uS14 from Borreliella burgdorferi (strain ATCC 35210 / DSM 4680 / CIP 102532 / B31) (Borrelia burgdorferi).